Reading from the N-terminus, the 280-residue chain is Large ribosomal subunit protein uL2 (280 aa).

Disordered stretches follow at residues 32 to 54 (SLLV…SRHM) and 221 to 280 (RGMA…DSKK). A compositionally biased stretch (polar residues) spans 37 to 49 (NKSTGGRNNNGRV). Residues 232–242 (MGGGEGKSKSG) are compositionally biased toward gly residues. Residues 257-280 (KGLKTRKRKKASSKLIVRRRDSKK) are compositionally biased toward basic residues.

It belongs to the universal ribosomal protein uL2 family. In terms of assembly, part of the 50S ribosomal subunit. Forms a bridge to the 30S subunit in the 70S ribosome.

Functionally, one of the primary rRNA binding proteins. Required for association of the 30S and 50S subunits to form the 70S ribosome, for tRNA binding and peptide bond formation. It has been suggested to have peptidyltransferase activity; this is somewhat controversial. Makes several contacts with the 16S rRNA in the 70S ribosome. In Chloroherpeton thalassium (strain ATCC 35110 / GB-78), this protein is Large ribosomal subunit protein uL2.